Reading from the N-terminus, the 926-residue chain is Storkhead-box protein 2 (926 aa).

Disordered stretches follow at residues 1 to 32 (MKKT…RSEK), 338 to 393 (EEEK…DIPG), 452 to 529 (EMPF…SYID), 564 to 586 (KEPS…PSYG), 633 to 693 (VKKL…SLDK), 723 to 802 (LLKS…VGTM), and 823 to 926 (TLLT…VTSV). A compositionally biased stretch (basic and acidic residues) spans 18-32 (FSDRASDRMRSRSEK). The span at 353–378 (HSGRSKKSRTHRKSHGKSRSHSKTRV) shows a compositional bias: basic residues. Residues 379-393 (SKGDPSDGSHLDIPG) are compositionally biased toward basic and acidic residues. A compositionally biased stretch (basic residues) spans 463–472 (SHSKVHRSHS). The span at 473 to 495 (HTQDRRSRNERSNKAKERSRSMD) shows a compositional bias: basic and acidic residues. A compositionally biased stretch (polar residues) spans 518 to 529 (QDDQTPSQSYID). Basic and acidic residues-rich tracts occupy residues 633–658 (VKKL…EESP) and 684–693 (HSAEPSSLDK). Polar residues predominate over residues 746–769 (LGTSAAQAMPPSQRQQEPGGNQEA). Basic and acidic residues predominate over residues 785 to 799 (GANKNAEEEKNRDDV). Polar residues-rich tracts occupy residues 847-884 (MDSS…QNPA) and 914-926 (KPSN…VTSV).

This chain is Storkhead-box protein 2 (Stox2), found in Mus musculus (Mouse).